A 62-amino-acid polypeptide reads, in one-letter code: Conotoxin TsMLCL-02 (62 aa).

Residues 1 to 19 form the signal peptide; that stretch reads MLCLPVFIILLLLASPAAP. A propeptide spanning residues 20-54 is cleaved from the precursor; that stretch reads NPLERRIQSDLIRAALEDADMKTEKGILSSIMGTL.

This sequence belongs to the conotoxin T superfamily. In terms of tissue distribution, expressed by the venom duct.

It is found in the secreted. This chain is Conotoxin TsMLCL-02, found in Conus tessulatus (Tessellate cone).